A 161-amino-acid polypeptide reads, in one-letter code: Anther-specific protein LAT52 (161 aa).

An N-terminal signal peptide occupies residues 1–17 (MAKAIVLLSALCILALA). Disulfide bonds link Cys35–Cys106, Cys38–Cys147, and Cys59–Cys94. An N-linked (GlcNAc...) asparagine glycan is attached at Asn61.

The protein belongs to the Ole e I family. In terms of tissue distribution, expressed in anthers and pollen.

Its function is as follows. May play a role during germination or early tube growth. In Solanum lycopersicum (Tomato), this protein is Anther-specific protein LAT52 (LAT52).